Reading from the N-terminus, the 91-residue chain is Islet amyloid polypeptide (91 aa).

A signal peptide spans 1 to 22; sequence MGILKLPVVLIVLCVALNHLEG. A propeptide spanning residues 23 to 33 is cleaved from the precursor; it reads GGKPTESHQME. Residues Cys-37 and Cys-42 are joined by a disulfide bond. Tyr-72 bears the Tyrosine amide mark. Residues 78–91 constitute a propeptide that is removed on maturation; it reads VEILKREPLSYLPI.

The protein belongs to the calcitonin family. In terms of assembly, can form homodimers. Interacts with IDE and INS. Interaction with INS inhibits homodimerization and fibril formation.

It localises to the secreted. Functionally, amylin/IAPP is a glucoregulatory peptide hormone that plays an important role in the regulation of energy homeostasis. Selectively inhibits insulin-stimulated glucose utilization and glycogen deposition in muscle, while not affecting adipocyte glucose metabolism. IAPP function is mediated by the CALCR-RAMPs (AMYRs) receptor complexes. Amylin can also bind CALCR receptor in the absence of RAMPs, although it is more selective for AMYRs. The protein is Islet amyloid polypeptide (IAPP) of Bos taurus (Bovine).